The chain runs to 420 residues: Glutamyl-tRNA reductase (420 aa).

Substrate-binding positions include 49-52 (TCNR), Ser109, 114-116 (EPQ), and Gln120. The Nucleophile role is filled by Cys50. NADP(+) is bound at residue 189–194 (GAGETI).

The protein belongs to the glutamyl-tRNA reductase family. As to quaternary structure, homodimer.

It catalyses the reaction (S)-4-amino-5-oxopentanoate + tRNA(Glu) + NADP(+) = L-glutamyl-tRNA(Glu) + NADPH + H(+). The protein operates within porphyrin-containing compound metabolism; protoporphyrin-IX biosynthesis; 5-aminolevulinate from L-glutamyl-tRNA(Glu): step 1/2. Catalyzes the NADPH-dependent reduction of glutamyl-tRNA(Glu) to glutamate 1-semialdehyde (GSA). The sequence is that of Glutamyl-tRNA reductase from Yersinia pseudotuberculosis serotype O:1b (strain IP 31758).